A 400-amino-acid chain; its full sequence is Dual-specificity RNA methyltransferase RlmN (400 aa).

Glu125 functions as the Proton acceptor in the catalytic mechanism. The Radical SAM core domain occupies Glu131–Leu372. Cys138 and Cys375 are oxidised to a cystine. Positions 145, 149, and 152 each coordinate [4Fe-4S] cluster. S-adenosyl-L-methionine contacts are provided by residues Gly201–Glu202, Ser233, Ser255–His257, and Asn332. Cys375 (S-methylcysteine intermediate) is an active-site residue.

Belongs to the radical SAM superfamily. RlmN family. [4Fe-4S] cluster is required as a cofactor.

It localises to the cytoplasm. The enzyme catalyses adenosine(2503) in 23S rRNA + 2 reduced [2Fe-2S]-[ferredoxin] + 2 S-adenosyl-L-methionine = 2-methyladenosine(2503) in 23S rRNA + 5'-deoxyadenosine + L-methionine + 2 oxidized [2Fe-2S]-[ferredoxin] + S-adenosyl-L-homocysteine. The catalysed reaction is adenosine(37) in tRNA + 2 reduced [2Fe-2S]-[ferredoxin] + 2 S-adenosyl-L-methionine = 2-methyladenosine(37) in tRNA + 5'-deoxyadenosine + L-methionine + 2 oxidized [2Fe-2S]-[ferredoxin] + S-adenosyl-L-homocysteine. In terms of biological role, specifically methylates position 2 of adenine 2503 in 23S rRNA and position 2 of adenine 37 in tRNAs. m2A2503 modification seems to play a crucial role in the proofreading step occurring at the peptidyl transferase center and thus would serve to optimize ribosomal fidelity. The polypeptide is Dual-specificity RNA methyltransferase RlmN (Bradyrhizobium diazoefficiens (strain JCM 10833 / BCRC 13528 / IAM 13628 / NBRC 14792 / USDA 110)).